A 247-amino-acid polypeptide reads, in one-letter code: Serine/threonine-protein phosphatase 2A activator (247 aa).

It belongs to the PTPA-type PPIase family.

It localises to the cytoplasm. The enzyme catalyses [protein]-peptidylproline (omega=180) = [protein]-peptidylproline (omega=0). PPIases accelerate the folding of proteins. It catalyzes the cis-trans isomerization of proline imidic peptide bonds in oligopeptides. Acts as a regulatory subunit for PP2A-like phosphatases modulating their activity or substrate specificity, probably by inducing a conformational change in the catalytic subunit, a direct target of the PPIase. Can reactivate inactive phosphatase PP2A-phosphatase methylesterase complexes (PP2Ai) in presence of ATP and Mg(2+) by dissociating the inactive form from the complex. The sequence is that of Serine/threonine-protein phosphatase 2A activator from Encephalitozoon cuniculi (strain GB-M1) (Microsporidian parasite).